The chain runs to 75 residues: MRKSDRSFYNWLMTNRNSMAANEVQQFANNAFLDSSFPKQSSDFDELSQYLEENTTYLMSMTTFDEAWSLYNAER.

It belongs to the UPF0346 family.

This Leuconostoc mesenteroides subsp. mesenteroides (strain ATCC 8293 / DSM 20343 / BCRC 11652 / CCM 1803 / JCM 6124 / NCDO 523 / NBRC 100496 / NCIMB 8023 / NCTC 12954 / NRRL B-1118 / 37Y) protein is UPF0346 protein LEUM_0763.